We begin with the raw amino-acid sequence, 261 residues long: MKIRVGVIGCLGRMGKKILNELITNTKVEIAGAVARSGSKYIDSDIGPIIANLGIKVTSSISDVFESSDVVIDFTTKECMLDCLKAAVKFKTPLVSGTTGIEGVDLKEYAAEVPILWSANMSVGVNVLLKLVKKAAELLGNEYDVEIWEMHHNLKKDSPSGTAIELGKTIANASKVDFQSNQYLHSGSNIRKKGGIGFAVSRGGGVIGDHSVMFVNSDERIELNHKAIDRTTFARGAVQAAVWLYENKREIPGLYSMQDVI.

9-14 contacts NAD(+); that stretch reads GCLGRM. R36 is an NADP(+) binding site. Residues 97–99 and 118–121 each bind NAD(+); these read GTT and SANM. H151 acts as the Proton donor/acceptor in catalysis. Position 152 (H152) interacts with (S)-2,3,4,5-tetrahydrodipicolinate. K155 (proton donor) is an active-site residue. 161–162 contacts (S)-2,3,4,5-tetrahydrodipicolinate; it reads GT.

The protein belongs to the DapB family.

It is found in the cytoplasm. It catalyses the reaction (S)-2,3,4,5-tetrahydrodipicolinate + NAD(+) + H2O = (2S,4S)-4-hydroxy-2,3,4,5-tetrahydrodipicolinate + NADH + H(+). It carries out the reaction (S)-2,3,4,5-tetrahydrodipicolinate + NADP(+) + H2O = (2S,4S)-4-hydroxy-2,3,4,5-tetrahydrodipicolinate + NADPH + H(+). The protein operates within amino-acid biosynthesis; L-lysine biosynthesis via DAP pathway; (S)-tetrahydrodipicolinate from L-aspartate: step 4/4. Functionally, catalyzes the conversion of 4-hydroxy-tetrahydrodipicolinate (HTPA) to tetrahydrodipicolinate. The polypeptide is 4-hydroxy-tetrahydrodipicolinate reductase (Wolbachia sp. subsp. Drosophila simulans (strain wRi)).